The chain runs to 334 residues: MAFNLKNRHLLSLVNHTEREIKFLLDLSRDLKRAKYAGTEQQRLKGKNIALIFEKTSTRTRCAFEVAAYDQGAHVTYIDPTSSQIGHKESMKDTARVLGRMYDAIEYRGFKQSVVNELAEYAGVPVFNGLTDEFHPTQMLADVLTMIENCEKPLSQISYVYIGDARNNVGNSLLLIGAKLGMDVRICAPKALLPEDSLVEMCQKFAAESGARITVTDDIDTAVKGVDFVHTDVWVSMGEPLETWGERIDMLMPYQVTPELMKRTGNPKVKFMHCLPAFHNSETKIGKQVAEKYPALANGIEVTEDVFESPANVAFEQAENRMHTIKAVMVASLA.

Residues 57-60, Gln84, Arg108, and 135-138 contribute to the carbamoyl phosphate site; these read STRT and HPTQ. L-ornithine-binding positions include Asn168, Asp232, and 236–237; that span reads SM. Carbamoyl phosphate-binding positions include 274–275 and Arg321; that span reads CL.

This sequence belongs to the aspartate/ornithine carbamoyltransferase superfamily. OTCase family.

It localises to the cytoplasm. The enzyme catalyses carbamoyl phosphate + L-ornithine = L-citrulline + phosphate + H(+). The protein operates within amino-acid biosynthesis; L-arginine biosynthesis; L-arginine from L-ornithine and carbamoyl phosphate: step 1/3. Its function is as follows. Reversibly catalyzes the transfer of the carbamoyl group from carbamoyl phosphate (CP) to the N(epsilon) atom of ornithine (ORN) to produce L-citrulline. The sequence is that of Ornithine carbamoyltransferase from Actinobacillus pleuropneumoniae serotype 5b (strain L20).